A 217-amino-acid chain; its full sequence is L-lactate dehydrogenase B chain (217 aa).

N22 serves as a coordination point for NAD(+). Substrate contacts are provided by N22 and R53. Residue H77 is the Proton acceptor of the active site. Y123 bears the Phosphotyrosine mark. Substrate is bound at residue T132. The residue at position 212 (K212) is an N6-acetyllysine.

Belongs to the LDH/MDH superfamily. LDH family. Homotetramer. Interacts with PTEN upstream reading frame protein MP31; the interaction leads to inhibition of mitochondrial lactate dehydrogenase activity, preventing conversion of lactate to pyruvate in mitochondria.

The protein resides in the cytoplasm. Its subcellular location is the mitochondrion inner membrane. It carries out the reaction (S)-lactate + NAD(+) = pyruvate + NADH + H(+). Its pathway is fermentation; pyruvate fermentation to lactate; (S)-lactate from pyruvate: step 1/1. In terms of biological role, interconverts simultaneously and stereospecifically pyruvate and lactate with concomitant interconversion of NADH and NAD(+). The chain is L-lactate dehydrogenase B chain (LDHB) from Oryctolagus cuniculus (Rabbit).